Consider the following 436-residue polypeptide: AP-2 complex subunit mu-B (436 aa).

The MHD domain maps to 170 to 435 (RNELFLDVLE…IGRSGIYETR (266 aa)). Positions 342, 346, and 355 each coordinate a 1,2-diacyl-sn-glycero-3-phospho-(1D-myo-inositol-3,4,5-trisphosphate).

The protein belongs to the adaptor complexes medium subunit family. In terms of assembly, adaptor protein complex 2 (AP-2) is a heterotetramer composed of two large adaptins (alpha-type subunit and beta-type subunit), a medium adaptin (mu-type subunit) and a small adaptin (sigma-type subunit).

Its subcellular location is the cell membrane. The protein resides in the membrane. The protein localises to the coated pit. Functionally, component of the adaptor complexes which link clathrin to receptors in coated vesicles. Clathrin-associated protein complexes are believed to interact with the cytoplasmic tails of membrane proteins, leading to their selection and concentration. AP50 is a subunit of the plasma membrane adaptor. The complex binds polyphosphoinositide-containing lipids. The protein is AP-2 complex subunit mu-B (ap2m1b) of Danio rerio (Zebrafish).